Reading from the N-terminus, the 139-residue chain is NAD(P) transhydrogenase subunit alpha part 2 (139 aa).

Transmembrane regions (helical) follow at residues Phe-49–Ser-69, Leu-78–Gly-98, and Val-107–Thr-127.

As to quaternary structure, complex of an alpha and a beta chain; in Rhodospirillum, the alpha chain seems to be made of two subunits.

The protein localises to the cell inner membrane. It carries out the reaction NAD(+) + NADPH + H(+)(in) = NADH + NADP(+) + H(+)(out). In terms of biological role, the transhydrogenation between NADH and NADP is coupled to respiration and ATP hydrolysis and functions as a proton pump across the membrane. This chain is NAD(P) transhydrogenase subunit alpha part 2 (pntAB), found in Rhodospirillum rubrum (strain ATCC 11170 / ATH 1.1.1 / DSM 467 / LMG 4362 / NCIMB 8255 / S1).